A 339-amino-acid chain; its full sequence is Ketol-acid reductoisomerase (NADP(+)) (339 aa).

The KARI N-terminal Rossmann domain occupies 1–182; the sequence is MKVYYDSDAD…GGGRSGVIET (182 aa). Residues 24–27, Arg-48, Ser-51, Ser-53, and 83–86 each bind NADP(+); these read YGSQ and DEHQ. Residue His-108 is part of the active site. Gly-134 contributes to the NADP(+) binding site. In terms of domain architecture, KARI C-terminal knotted spans 183–328; that stretch reads TFREEVETDL…ARLRKMMPWI (146 aa). Mg(2+) contacts are provided by Asp-191, Glu-195, Glu-227, and Glu-231. Ser-252 is a binding site for substrate.

Belongs to the ketol-acid reductoisomerase family. Mg(2+) is required as a cofactor.

It carries out the reaction (2R)-2,3-dihydroxy-3-methylbutanoate + NADP(+) = (2S)-2-acetolactate + NADPH + H(+). The enzyme catalyses (2R,3R)-2,3-dihydroxy-3-methylpentanoate + NADP(+) = (S)-2-ethyl-2-hydroxy-3-oxobutanoate + NADPH + H(+). It participates in amino-acid biosynthesis; L-isoleucine biosynthesis; L-isoleucine from 2-oxobutanoate: step 2/4. The protein operates within amino-acid biosynthesis; L-valine biosynthesis; L-valine from pyruvate: step 2/4. Functionally, involved in the biosynthesis of branched-chain amino acids (BCAA). Catalyzes an alkyl-migration followed by a ketol-acid reduction of (S)-2-acetolactate (S2AL) to yield (R)-2,3-dihydroxy-isovalerate. In the isomerase reaction, S2AL is rearranged via a Mg-dependent methyl migration to produce 3-hydroxy-3-methyl-2-ketobutyrate (HMKB). In the reductase reaction, this 2-ketoacid undergoes a metal-dependent reduction by NADPH to yield (R)-2,3-dihydroxy-isovalerate. The sequence is that of Ketol-acid reductoisomerase (NADP(+)) from Zymomonas mobilis subsp. mobilis (strain ATCC 31821 / ZM4 / CP4).